The primary structure comprises 162 residues: Transcriptional regulator MraZ (162 aa).

SpoVT-AbrB domains are found at residues 11–62 (EHPS…GLSV) and 98–141 (AVEC…SRDT).

It belongs to the MraZ family. Forms oligomers.

The protein resides in the cytoplasm. It localises to the nucleoid. This is Transcriptional regulator MraZ from Pelobacter propionicus (strain DSM 2379 / NBRC 103807 / OttBd1).